The following is an 814-amino-acid chain: Kexin (814 aa).

The N-terminal stretch at 1–19 (MKVRKYITLCFWWAFSTSA) is a signal peptide. The propeptide occupies 20 to 109 (LVSSQQIPLK…LFPRNDLFKR (90 aa)). Residue N42 is glycosylated (N-linked (GlcNAc...) asparagine). The propeptide at 110-113 (LPVP) is removed by dipeptidylpeptidase STE13. Over 114 to 678 (APPMDSSLLP…KLSSPRQAMH (565 aa)) the chain is Lumenal. D135 provides a ligand contact to Ca(2+). A Peptidase S8 domain is found at 141–453 (QWHLVNPSFP…FGKIDAHKLI (313 aa)). N163 carries an N-linked (GlcNAc...) asparagine glycan. Catalysis depends on D175, which acts as the Charge relay system. D184 contacts Ca(2+). Catalysis depends on H213, which acts as the Charge relay system. Residues N227, D277, D320, and E350 each coordinate Ca(2+). Intrachain disulfides connect C230/C377 and C322/C352. S385 functions as the Charge relay system in the catalytic mechanism. 2 N-linked (GlcNAc...) asparagine glycosylation sites follow: N404 and N480. The 135-residue stretch at 462 to 596 (VNAQTWFYLP…RLKLFGESID (135 aa)) folds into the P/Homo B domain. The tract at residues 651–671 (PQTTTASTDPDSDPNTPKKLS) is disordered. The span at 653–667 (TTTASTDPDSDPNTP) shows a compositional bias: low complexity. A helical transmembrane segment spans residues 679-699 (YFLTIFLIGATFLVLYFMFFM). Residues 700–814 (KSRRRIRRSR…PDVPPSSGRS (115 aa)) are Cytoplasmic-facing. The disordered stretch occupies residues 756 to 814 (SLSSSENGDAEHTIDSVLTNENPFSDPIKQKFPNDANAESASNKLQELQPDVPPSSGRS). Over residues 792 to 801 (NAESASNKLQ) the composition is skewed to polar residues.

It belongs to the peptidase S8 family. Furin subfamily. It depends on Ca(2+) as a cofactor. Post-translationally, O-glycosylated.

The protein localises to the golgi apparatus. It is found in the trans-Golgi network membrane. The enzyme catalyses Cleavage of -Lys-Arg-|-Xaa- and -Arg-Arg-|-Xaa- bonds to process yeast alpha-factor pheromone and killer toxin precursors.. In terms of biological role, processing of precursors of alpha-factors and killer toxin. In Saccharomyces cerevisiae (strain ATCC 204508 / S288c) (Baker's yeast), this protein is Kexin (KEX2).